The chain runs to 477 residues: Homeobox protein Meis2 (477 aa).

The segment at 71 to 191 (DALKRDKDAI…KMPIDLVIDE (121 aa)) is required for interaction with PBX1. In terms of domain architecture, MEIS N-terminal spans 110–193 (GGDVCSSDSF…PIDLVIDERD (84 aa)). The span at 193–203 (DGSSKSDHEEL) shows a compositional bias: basic and acidic residues. A disordered region spans residues 193 to 283 (DGSSKSDHEE…KKRQKKRGIF (91 aa)). Polar residues-rich tracts occupy residues 204–217 (SGSSTNLADHNPSS) and 239–251 (GHASQSGDNSSEQ). The homeobox; TALE-type DNA-binding region spans 276–338 (RQKKRGIFPK…NARRRIVQPM (63 aa)). Positions 299–333 (LTHPYPSEEQKKQLAQDTGLTILQVNNWFINARRR) are interaction with DNA. A transcriptional activation domain region spans residues 340–477 (DQSNRAGFLL…GGQVMDIHAQ (138 aa)).

This sequence belongs to the TALE/MEIS homeobox family. In terms of assembly, monomer and homodimer. Heterodimer with HOXB13. Isoform Meis2A interacts with TLX1. Isoform Meis2B interacts with HOXA13 and PBX1 isoform PBX1b. Isoform Meis2D interacts with SP1, SP3 and KLF4. Isoform Meis2D interacts with PBX1 isoform PBX1a; the interaction partially relieves MEIS2 autoinhibition. Isoform Meis2B is part of a PDX1:PBX1b:MEIS2b complex; Meis2B is recruited by PBX1b and can be replaced by isoform Meis2D in a small fraction of complexes. Can form trimeric complexes including HOXB8 and PBX2 or PBX3. Displays spatially restricted expression patterns in the developing nervous system, limbs, face, and in various viscera. In adult, it is mainly expressed in the brain and female genital tract, with a different distribution of the alternative splice forms in these organs. Lower expression in lung and only basal level in heart, liver, kidney, spleen, and testis. Expressed in pancreatic islets (beta-cells only).

The protein localises to the nucleus. It is found in the cytoplasm. It localises to the perinuclear region. Involved in transcriptional regulation. Binds to HOX or PBX proteins to form dimers, or to a DNA-bound dimer of PBX and HOX proteins and thought to have a role in stabilization of the homeoprotein-DNA complex. Isoform Meis2B is required for the activity of a PDX1:PBX1b:MEIS2b complex in pancreatic acinar cells involved in the transcriptional activation of the ELA1 enhancer; the complex binds to the enhancer B element and cooperates with the transcription factor 1 complex (PTF1) bound to the enhancer A element; MEIS2 is not involved in complex DNA-binding. Probably in complex with PBX1, is involved in transcriptional regulation by KLF4. Isoforms Meis2B and Meis2D can bind to a EPHA8 promoter sequence containing the DNA motif 5'-CGGTCA-3'; in cooperation with a PBX protein (such as PBX2) is proposed to be involved in the transcriptional activation of EPHA8 in the developing midbrain. May be involved in regulation of myeloid differentiation. Can bind to the DNA sequence 5'-TGACAG-3'in the activator ACT sequence of the D(1A) dopamine receptor (DRD1) promoter and activate DRD1 transcription. In Mus musculus (Mouse), this protein is Homeobox protein Meis2 (Meis2).